The primary structure comprises 570 residues: MSASKEVRSCLWTQSLRRELSGYCSNIKLQVVKDAQALLHGLDFSEVSNVQRLMRKQKRDDGDLKRLRDLNQAVNNLVELKSTQQKSVLRVGTLSSDDLLILAADLEKLKSKVTRTERPLSSGVYMGNLSSQQLDQRRALLNMIGMTGVSGGGKGASNGIVRVWDVKNAELLNNQFGTMPSLTLACLTKQGQVDLNDAVQALTDLGLIYTAKYPNSSDLDRLSQSHPILNMIDTKKSSLNISGYNFSLGAAVKAGACMLDGGNMLETIKVSPQTMDGILKSILKVKKSLGMFVSDTPGERNPYENILYKICLSGDGWSYIASRTSIVGRAWENTVVDLEQDNKPQKIGNGGSNKSLQSAGFAAGLIYSQLMTLKDFKCFNLIPNAKTWMDIEGRPEDPVEIALYQPSSGCYVHFFREPTDLKQFKQDAKYSHGRDVTDLFAAQPGLTSAVIEALPRNMVITCQGSEDIRKLLESQGRRDIKLIDITLSKADSRKFENAVWDQFKDLCHMHTGVVVEKKKRGGKEEITPHCALMDCIMFDAAVSGGLDAKVLRVVLPRDMVFRTSTPKVVL.

The interval 54 to 241 (MRKQKRDDGD…IDTKKSSLNI (188 aa)) is binding site for the cap structure m7GTP. The Mn(2+) site is built by Asp390 and Glu392. Zn(2+) is bound by residues Glu400, Cys507, His510, and Cys530. Asp534 provides a ligand contact to Mn(2+).

Belongs to the arenaviridae nucleocapsid protein family. As to quaternary structure, homomultimerizes to form the nucleocapsid. Binds to viral genomic RNA. Interacts with glycoprotein G2. Interacts with protein Z; this interaction probably directs the encapsidated genome to budding sites. Interacts with protein L; this interaction does not interfere with Z-L interaction. Interacts with host IKBKE (via Protein kinase domain); the interaction inhibits IKBKE kinase activity.

It is found in the virion. Its subcellular location is the host cytoplasm. Functionally, encapsidates the genome, protecting it from nucleases. The encapsidated genomic RNA is termed the nucleocapsid (NC). Serves as template for viral transcription and replication. The increased presence of protein N in host cell does not seem to trigger the switch from transcription to replication as observed in other negative strain RNA viruses. Through the interaction with host IKBKE, strongly inhibits the phosphorylation and nuclear translocation of host IRF3, a protein involved in interferon activation pathway, leading to the inhibition of interferon-beta and IRF3-dependent promoters activation. Also encodes a functional 3'-5' exoribonuclease that degrades preferentially dsRNA substrates and thereby participates in the suppression of interferon induction. This chain is Nucleoprotein, found in Homo sapiens (Human).